The primary structure comprises 251 residues: Blue-light absorbing proteorhodopsin (251 aa).

The signal sequence occupies residues methionine 1 to alanine 18. 7 helical membrane passes run valine 30–valine 50, valine 65–isoleucine 85, isoleucine 97–cysteine 117, valine 120–phenylalanine 140, alanine 144–isoleucine 164, methionine 190–leucine 210, and leucine 223–valine 243. The residue at position 233 (lysine 233) is an N6-(retinylidene)lysine.

The protein belongs to the archaeal/bacterial/fungal opsin family. Contains one covalently linked retinal chromophore.

It is found in the cell membrane. In terms of biological role, light-driven proton pump. May have a regulatory rather than energy harvesting function, based on light-induced opening of proton channels, to modulate cell physiology depending on light intensity variations. Could be, therefore, a sensory rhodopsin, potentially associated with a transducer component. This is Blue-light absorbing proteorhodopsin from Gamma-proteobacterium Hot 75m4.